A 675-amino-acid chain; its full sequence is LVRKRCERLYEGRMGVWNGSLKAELRPAEIVLAKKTRSFTAAPLDTLLGAKVCVDDFNNWFYSKNMECPWTVGMTKFYKGWDEFLRKFPDGWVYCDADGSQFDSSLTPYLLNAVLSIRLWAMEDWDIGEQMLKNLYGEITYTPILTPDGTIVKKFKGNNSGQPSTVVDNTLMVLITMYYALRKAGYDTKTQEDMCVFYINGDDLCIAIHPDHEHVLDSFSSSFAELGLKYDFAQRHRNKQNLWFMSHRGILIDDIYIPKLEPERIVAILEWDKSKLPEHRLEAITAAMIESWGHGDLTHQIRRFYQWVLEQAPFNELAKQGRAPYVSEVGLRRLYTSERGSMDELEAYIDKYFERERGDSPELLVYHESRSTDDYQLVCSNNTHVFHQSKNEAVDAGLNEKLKEKENQKEKEKEKQKEKEKDGASDGNDVSTSTKTGERDRDVNVGTSGTFTVPRIKSFTDKMVLPRIKGKTVLNLNHLLQYNPQQIDISNTRATHSQFEKWYEGVRNDYGLNDNEMQVMLNGLMVWCIENGTSPDISGVWVMMDGETQVDYPIKPLIEHATPSFRQIMAHFSNAAEAYIAKRNATERYMPRYGIKRNLTDISLARYAFDFYEVNSKTPDRAREAHMQMKAAALRNTSRKMFGMDGSVSNKEENTERHTVEDVNRDMHSLLGMRN.

Residues 92–216 (WVYCDADGSQ…AIHPDHEHVL (125 aa)) enclose the RdRp catalytic domain. The segment covering 397-424 (GLNEKLKEKENQKEKEKEKQKEKEKDGA) has biased composition (basic and acidic residues). The interval 397–447 (GLNEKLKEKENQKEKEKEKQKEKEKDGASDGNDVSTSTKTGERDRDVNVGT) is disordered.

Belongs to the potyviridae genome polyprotein family. Genome polyprotein of potyviruses undergoes post-translational proteolytic processing by the main proteinase NIa-pro resulting in the production of at least ten individual proteins. The P1 proteinase and the HC-pro cleave only their respective C-termini autocatalytically. 6K1 is essential for proper proteolytic separation of P3 from CI.

The protein localises to the virion. It catalyses the reaction RNA(n) + a ribonucleoside 5'-triphosphate = RNA(n+1) + diphosphate. Functionally, an RNA-dependent RNA polymerase that plays an essential role in the virus replication. In terms of biological role, involved in aphid transmission, cell-to-cell and systemis movement, encapsidation of the viral RNA and in the regulation of viral RNA amplification. In Papaya ringspot virus (strain P / mutant HA 5-1), this protein is Genome polyprotein.